The primary structure comprises 279 residues: Shikimate dehydrogenase (NADP(+)) (279 aa).

Shikimate is bound by residues 20 to 22 (SRS) and Thr67. Lys71 (proton acceptor) is an active-site residue. Position 83 (Asp83) interacts with NADP(+). 2 residues coordinate shikimate: Asn92 and Asp108. Residues 134–138 (GAGGA) and Leu223 each bind NADP(+). Tyr225 contacts shikimate. Gly246 is an NADP(+) binding site.

It belongs to the shikimate dehydrogenase family. In terms of assembly, homodimer.

It carries out the reaction shikimate + NADP(+) = 3-dehydroshikimate + NADPH + H(+). The protein operates within metabolic intermediate biosynthesis; chorismate biosynthesis; chorismate from D-erythrose 4-phosphate and phosphoenolpyruvate: step 4/7. Its function is as follows. Involved in the biosynthesis of the chorismate, which leads to the biosynthesis of aromatic amino acids. Catalyzes the reversible NADPH linked reduction of 3-dehydroshikimate (DHSA) to yield shikimate (SA). In Cereibacter sphaeroides (strain ATCC 17029 / ATH 2.4.9) (Rhodobacter sphaeroides), this protein is Shikimate dehydrogenase (NADP(+)).